The primary structure comprises 687 residues: A-kinase anchor protein 8 (687 aa).

Residues Met-1–Phe-195 form an interaction with MCM2 region. The segment at Met-1 to Phe-210 is interaction with DPY30. The residue at position 72 (Ser-72) is a Phosphoserine. 2 disordered regions span residues Lys-105–Ser-124 and Gly-185–Pro-218. At Arg-109 the chain carries Asymmetric dimethylarginine; alternate. Arg-109 is subject to Omega-N-methylarginine; alternate. A compositionally biased stretch (gly residues) spans Arg-109–Gly-118. Positions Arg-109–Ser-201 are interaction with DDX5. Ser-199 carries the phosphoserine modification. Omega-N-methylarginine occurs at positions 232 and 276. A disordered region spans residues Ser-277–Asp-379. 2 stretches are compositionally biased toward basic and acidic residues: residues Arg-280–Gly-294 and Pro-311–Ser-320. The Bipartite nuclear localization signal motif lies at Arg-286 to Lys-303. Lys-314 is covalently cross-linked (Glycyl lysine isopeptide (Lys-Gly) (interchain with G-Cter in SUMO2)). A phosphoserine mark is found at Ser-320, Ser-325, and Ser-336. The span at Asp-321–Ala-331 shows a compositional bias: acidic residues. Positions Arg-335 to Lys-357 are enriched in basic and acidic residues. Positions Arg-384–Glu-447 are involved in chromatin-binding. C2H2 AKAP95-type zinc fingers lie at residues Cys-389 to His-411 and Cys-478 to His-501. An involved in condensin complex recruitment region spans residues Ser-522–Thr-565. Residue Thr-552 is modified to Phosphothreonine. The segment at Glu-568–Val-585 is RII-binding. The required for interaction with MYCBP stretch occupies residues Glu-572 to Gly-589. The tract at residues Gln-624–Ser-659 is disordered. The span at Arg-633–Asn-648 shows a compositional bias: basic and acidic residues. Residue Ser-659 is modified to Phosphoserine.

This sequence belongs to the AKAP95 family. As to quaternary structure, binds to the PKA RII-alpha regulatory subunit PRKAR2A. Interacts (via C-terminus) with FIGN. Interacts with NCAPD2, CCND3, CCNE1, MCM2, RPS6KA1, DDX5, PDE4A. Interacts with MYCBP; MYCBP is translocated to the nucleus and the interaction prevents the association of the PKA catalytic subunit leading to suppression of PKA activity. Interacts with CCND1, CASP3. Interacts with NFKB1; detetcted in the cytoplasm. Interacts with DPY30; mediating AKAP8 association with at least the MLL4/WBP7 HMT complex. Interacts with HDAC3; increased during mitosis. Interacts with GJA1; in the nucleus and in the nuclear membrane; the nuclear association increases with progress of cell cycle G1, S and G2 phase and decreases in M phase. Phosphorylated on tyrosine residues probably by SRC subfamily protein kinases; multiple phosphorylation is leading to dissociation from nuclear structures implicated in chromatin structural changes.

The protein localises to the nucleus matrix. It is found in the nucleus. It localises to the nucleolus. Its subcellular location is the cytoplasm. In terms of biological role, anchoring protein that mediates the subcellular compartmentation of cAMP-dependent protein kinase (PKA type II). Acts as an anchor for a PKA-signaling complex onto mitotic chromosomes, which is required for maintenance of chromosomes in a condensed form throughout mitosis. Recruits condensin complex subunit NCAPD2 to chromosomes required for chromatin condensation; the function appears to be independent from PKA-anchoring. Specifically involved in recruitment of CAPD2 to, and condensation of maternal but not paternal chromosomes. May help to deliver cyclin D/E to CDK4 to facilitate cell cycle progression. Required for cell cycle G2/M transition and histone deacetylation during mitosis. In mitotic cells recruits HDAC3 to the vicinity of chromatin leading to deacetylation and subsequent phosphorylation at 'Ser-10' of histone H3; in this function may act redundantly with AKAP8L. Involved in nuclear retention of RPS6KA1 upon ERK activation thus inducing cell proliferation. May be involved in regulation of DNA replication by acting as scaffold for MCM2. Enhances HMT activity of the KMT2 family MLL4/WBP7 complex and is involved in transcriptional regulation. In a teratocarcinoma cell line is involved in retinoic acid-mediated induction of developmental genes implicating H3 'Lys-4' methylation. May be involved in recruitment of active CASP3 to the nucleus in apoptotic cells. May act as a carrier protein of GJA1 for its transport to the nucleus. May play a repressive role in the regulation of rDNA transcription. Preferentially binds GC-rich DNA in vitro. In cells, associates with ribosomal RNA (rRNA) chromatin, preferentially with rRNA promoter and transcribed regions. Involved in modulation of Toll-like receptor signaling. Required for the cAMP-dependent suppression of TNF-alpha in early stages of LPS-induced macrophage activation; the function probably implicates targeting of PKA to NFKB1. The chain is A-kinase anchor protein 8 (Akap8) from Mus musculus (Mouse).